The primary structure comprises 418 residues: Putative ion-transport protein YfeO (418 aa).

12 consecutive transmembrane segments (helical) span residues L10–V30, D54–I74, A99–P119, E120–P140, I149–I169, L186–P206, I223–C243, V258–V278, D300–F320, G322–H342, V343–V363, and L371–M391.

The protein belongs to the chloride channel (TC 2.A.49) family.

The protein resides in the cell membrane. The sequence is that of Putative ion-transport protein YfeO from Escherichia coli O139:H28 (strain E24377A / ETEC).